The sequence spans 78 residues: MRSGVFVAVLVVVVFALLTQGQELHVPEREAVANLAARILKIVHAPHDAAAGVPHKRNSELINSLLGISALMNEAGRR.

An N-terminal signal peptide occupies residues 1 to 21 (MRSGVFVAVLVVVVFALLTQG). Alanine amide is present on A75.

The protein belongs to the arthropod PDH family. In terms of tissue distribution, eyestalk sinus gland.

The protein localises to the secreted. In terms of biological role, the pigment-dispersing hormone causes the migration of the distal retinal pigment into the proximal end of the pigment chromatophore cells and thus decreases the amount of light entering the retinulas. May also function as a neurotransmitter and/or neuromodulator. The protein is Pigment-dispersing hormone 2 peptides (PDH2) of Callinectes sapidus (Blue crab).